The primary structure comprises 447 residues: MIGRIVQILGSIVDVEFKKNNIPYIYNALFIKEFNLYLEVQQQIGNNIVRTIALGSTYGLKRYLLVIDTKKPILTPVGNCTLGRILNVLGNPIDNNGEIISNKKKPIHCSPPKFSDQVFSNNILETGIKVIDLLCPFLRGGKIGLFGGAGVGKTINMMELIRNIAIEHKGCSVFIGVGERTREGNDFYYEMKESNVLDKVSLIYGQMNEPSGNRLRVALTGLSIAEEFREMGKDVLLFIDNIYRFTLAGTEISALLGRMPSAVGYQPTLAEEMGKLQERISSTKNGSITSVQAIYVPADDLTDPSPSTTFTHLDSTIVLSRQIAELGIYPAIDPLESYSKQLDPYIVGIEHYEIANSVKFYLQKYKELKDTIAILGMDELSENDQIIVKRARKLQRFFSQPFFVGEIFTGIKGEYVNIKDTIQCFKNILNGEFDNINEKNFYMIGKI.

147-154 contributes to the ATP binding site; the sequence is GGAGVGKT.

It belongs to the ATPase alpha/beta chains family. As to quaternary structure, F-type ATPases have 2 components, CF(1) - the catalytic core - and CF(0) - the membrane proton channel. CF(1) has five subunits: alpha(3), beta(3), gamma(1), delta(1), epsilon(1). CF(0) has three main subunits: a(1), b(2) and c(9-12). The alpha and beta chains form an alternating ring which encloses part of the gamma chain. CF(1) is attached to CF(0) by a central stalk formed by the gamma and epsilon chains, while a peripheral stalk is formed by the delta and b chains.

It localises to the cell membrane. The enzyme catalyses ATP + H2O + 4 H(+)(in) = ADP + phosphate + 5 H(+)(out). In terms of biological role, produces ATP from ADP in the presence of a proton gradient across the membrane. The catalytic sites are hosted primarily by the beta subunits. This Carsonella ruddii (strain PV) protein is ATP synthase subunit beta.